The sequence spans 175 residues: NADH-quinone oxidoreductase subunit I (175 aa).

2 4Fe-4S ferredoxin-type domains span residues 69 to 98 (KRDE…IEAG) and 115 to 144 (KKFE…LDGP). Residues Cys-78, Cys-81, Cys-84, Cys-88, Cys-124, Cys-127, Cys-130, and Cys-134 each coordinate [4Fe-4S] cluster.

It belongs to the complex I 23 kDa subunit family. NDH-1 is composed of 14 different subunits. Subunits NuoA, H, J, K, L, M, N constitute the membrane sector of the complex. [4Fe-4S] cluster is required as a cofactor.

It localises to the cell inner membrane. The catalysed reaction is a quinone + NADH + 5 H(+)(in) = a quinol + NAD(+) + 4 H(+)(out). Its function is as follows. NDH-1 shuttles electrons from NADH, via FMN and iron-sulfur (Fe-S) centers, to quinones in the respiratory chain. The immediate electron acceptor for the enzyme in this species is believed to be ubiquinone. Couples the redox reaction to proton translocation (for every two electrons transferred, four hydrogen ions are translocated across the cytoplasmic membrane), and thus conserves the redox energy in a proton gradient. In Leptospira borgpetersenii serovar Hardjo-bovis (strain JB197), this protein is NADH-quinone oxidoreductase subunit I.